Consider the following 355-residue polypeptide: Mu-like prophage FluMu I protein (355 aa).

This sequence belongs to the peptidase U35 family.

In terms of biological role, potential protease involved in virion morphogenesis. The polypeptide is Mu-like prophage FluMu I protein (Haemophilus influenzae (strain ATCC 51907 / DSM 11121 / KW20 / Rd)).